A 261-amino-acid chain; its full sequence is ER membrane protein complex subunit 3 (261 aa).

The Lumenal portion of the chain corresponds to 2-14; it reads AGPELLLDSNIRL. The helical transmembrane segment at 15–38 threads the bilayer; it reads WVVLPIVIITFFVGMIRHYVSILL. Topologically, residues 39 to 114 are cytoplasmic; it reads QSDKKLTQEQ…TMLTDMMKGN (76 aa). The helical transmembrane segment at 115-130 threads the bilayer; it reads VTNVLPMILIGGWINM. Topologically, residues 131-168 are lumenal; that stretch reads TFSGFVTTKVPFPLTLRFKPMLQQGIELLTLDASWVSS. Residues 169–187 form a helical membrane-spanning segment; it reads ASWYFLNVFGLRSIYSLIL. Residues 188 to 261 are Cytoplasmic-facing; the sequence is GQDNAADQSR…FKKELQTSIF (74 aa).

Belongs to the EMC3 family. Component of the ER membrane protein complex (EMC).

The protein resides in the endoplasmic reticulum membrane. Its function is as follows. Part of the endoplasmic reticulum membrane protein complex (EMC) that enables the energy-independent insertion into endoplasmic reticulum membranes of newly synthesized membrane proteins. Preferentially accommodates proteins with transmembrane domains that are weakly hydrophobic or contain destabilizing features such as charged and aromatic residues. Involved in the cotranslational insertion of multi-pass membrane proteins in which stop-transfer membrane-anchor sequences become ER membrane spanning helices. It is also required for the post-translational insertion of tail-anchored/TA proteins in endoplasmic reticulum membranes. By mediating the proper cotranslational insertion of N-terminal transmembrane domains in an N-exo topology, with translocated N-terminus in the lumen of the ER, controls the topology of multi-pass membrane proteins like the G protein-coupled receptors. By regulating the insertion of various proteins in membranes, it is indirectly involved in many cellular processes. This Homo sapiens (Human) protein is ER membrane protein complex subunit 3 (EMC3).